Here is a 206-residue protein sequence, read N- to C-terminus: Ephrin-A4 (206 aa).

An N-terminal signal peptide occupies residues 1–25 (MRLLPLLRTVLWAALLGSRLPGCSS). One can recognise an Ephrin RBD domain in the interval 26–158 (LRHPIYWNSS…RLQVSVCCKE (133 aa)). Asn-33 carries N-linked (GlcNAc...) asparagine glycosylation. A Cell attachment site motif is present at residues 41–43 (RGD). 2 cysteine pairs are disulfide-bonded: Cys-58–Cys-99 and Cys-86–Cys-147. N-linked (GlcNAc...) asparagine glycosylation occurs at Asn-98. The interval 161–180 (SSHESAHPVGSPGESGTSGW) is disordered. A lipid anchor (GPI-anchor amidated serine) is attached at Ser-175. Positions 176–206 (GTSGWRGGHAPSPLCLLLLLLLPILRLLRVL) are cleaved as a propeptide — removed in mature form.

The protein belongs to the ephrin family. In terms of tissue distribution, expressed in myogenic progenitor cells.

It is found in the cell membrane. Its function is as follows. Cell surface GPI-bound ligand for Eph receptors, a family of receptor tyrosine kinases which are crucial for migration, repulsion and adhesion during neuronal, vascular and epithelial development. Binds promiscuously Eph receptors residing on adjacent cells, leading to contact-dependent bidirectional signaling into neighboring cells. May play a role in the interaction between activated B-lymphocytes and dendritic cells in tonsils. The sequence is that of Ephrin-A4 (Efna4) from Mus musculus (Mouse).